A 276-amino-acid chain; its full sequence is Putative non-heme chloroperoxidase (276 aa).

An AB hydrolase-1 domain is found at 26-263 (PIVLIHGFPL…GGPHAINWTH (238 aa)). Residues S99, D228, and H257 contribute to the active site.

It belongs to the AB hydrolase superfamily. Bacterial non-heme haloperoxidase / perhydrolase family.

In Synechocystis sp. (strain ATCC 27184 / PCC 6803 / Kazusa), this protein is Putative non-heme chloroperoxidase.